We begin with the raw amino-acid sequence, 153 residues long: Ribosome maturation factor RimP (153 aa).

The protein belongs to the RimP family.

It is found in the cytoplasm. In terms of biological role, required for maturation of 30S ribosomal subunits. The sequence is that of Ribosome maturation factor RimP from Burkholderia pseudomallei (strain 1710b).